We begin with the raw amino-acid sequence, 585 residues long: Arginine--tRNA ligase (585 aa).

The 'HIGH' region signature appears at 131–141; the sequence is ANPTGPMHVGH.

This sequence belongs to the class-I aminoacyl-tRNA synthetase family. In terms of assembly, monomer.

It localises to the cytoplasm. The enzyme catalyses tRNA(Arg) + L-arginine + ATP = L-arginyl-tRNA(Arg) + AMP + diphosphate. This Agrobacterium fabrum (strain C58 / ATCC 33970) (Agrobacterium tumefaciens (strain C58)) protein is Arginine--tRNA ligase.